We begin with the raw amino-acid sequence, 375 residues long: Arabinose metabolism transcriptional repressor (375 aa).

The HTH gntR-type domain maps to 1-70; sequence METKYNFVKQ…QGAGTFCADR (70 aa). A DNA-binding region (H-T-H motif) is located at residues 30–49; the sequence is ENELMKEYNVSRHTVRKAID.

The protein resides in the cytoplasm. Transcriptional repressor of the arabinose utilization genes. This is Arabinose metabolism transcriptional repressor (araR) from Halalkalibacterium halodurans (strain ATCC BAA-125 / DSM 18197 / FERM 7344 / JCM 9153 / C-125) (Bacillus halodurans).